A 1310-amino-acid chain; its full sequence is Zinc finger protein 521 (1310 aa).

The span at 1-10 (MSRRKQAKPR) shows a compositional bias: basic residues. The interval 1 to 46 (MSRRKQAKPRSLKDPNCKLEDTSEDGESPDCKKRQEEGDELEEEEA) is disordered. Basic and acidic residues predominate over residues 11-21 (SLKDPNCKLED). The segment at 48–68 (HSCDSCLQVFESLSDITEHKI) adopts a C2H2-type 1; degenerate zinc-finger fold. The tract at residues 82 to 106 (DPTCSWPASSPSSKDQASPIHGEGF) is disordered. Residues 87 to 97 (WPASSPSSKDQ) are compositionally biased toward polar residues. 7 consecutive C2H2-type zinc fingers follow at residues 119 to 141 (YPCQFCDKSFSRLSYLKHHEQSH), 147 to 169 (FKCTYCSRLFKHKRSRDRHIKLH), 175 to 197 (YHCSECDASFSRSDHLKIHLKTH), 203 to 225 (YKCAICRRGFLSSSSLHGHMQVH), 247 to 270 (QKCSQCEEGFDFPEDLQKHIAECH), 282 to 305 (LQCMYCHELFMEETSLLNHMEQIH), and 311 to 333 (NSCNICSENFHSVEELYSHMDSH). The C2H2-type 9; degenerate zinc finger occupies 404 to 428 (YSCIYCSKQLFSSLAVLQIHLKTMH). 3 C2H2-type zinc fingers span residues 436–459 (HICQYCLEVLPSLFNLNEHLKQVH), 476–499 (YQCNFCSEIFNDLNMLQDHIRSSH), and 512–535 (FFCPHCYMGFLTDTSLEEHIRQVH). The segment at 559–584 (YSCSYCTNSPIFNSVLKLNKHIKENH) adopts a C2H2-type 13; atypical zinc-finger fold. C2H2-type zinc fingers lie at residues 633–655 (YICNQCGAKYTSLDGFQTHLKTH), 663–685 (LTCPQCNKEFPNQESLLKHVTIH), 693–716 (YICESCDKQFTSVDDLQKHLLDMH), 721–744 (FRCTLCQEVFDSKVSIQLHLAVKH), 751–774 (YRCTSCNWDFRTETDLQLHVKHNH), 782–804 (HKCIFCGESFGTEVELQCHITTH), and 808–831 (YNCKFCSKAFHAIILLEKHLREKH). A C2H2-type 21; degenerate zinc finger spans residues 885-907 (YGCDICGAAYTMESLLQNHQLRD). C2H2-type zinc fingers lie at residues 929–951 (YKCNVCSRTFFSEGGLREHMQTH), 958–980 (YMCPICGERFPSLLTLTEHKVTH), and 1019–1041 (FRCVVCMQTVTSTLELKIHGTFH). A C2H2-type 25; degenerate zinc finger spans residues 1064–1082 (YKCASCLKEFRSKQDLVKL). 5 C2H2-type zinc fingers span residues 1138-1161 (TRCSSCNVKFESETELQNHIQTIH), 1194-1216 (YQCIKCQMVFYNEWDIQVHVANH), 1224-1246 (HECKLCSQTFDSPAKLQCHLIEH), 1255-1278 (FKCPVCFTVFVQANKLQQHIFSAH), and 1285-1308 (YDCAQCPQKFFFQTELQNHTMSQH).

Belongs to the krueppel C2H2-type zinc-finger protein family.

The protein localises to the nucleus. In terms of biological role, transcription factor that can both act as an activator or a repressor depending on the context. Involved in BMP signaling and in the regulation of the immature compartment of the hematopoietic system. In Xenopus laevis (African clawed frog), this protein is Zinc finger protein 521 (znf521).